The chain runs to 408 residues: Translation initiation factor 2 subunit gamma (408 aa).

The tr-type G domain maps to 4-201 (QSEINIGLVG…TIEERIKTPK (198 aa)). The tract at residues 13–20 (GHVDHGKT) is G1. Mg(2+) contacts are provided by Asp16, Thr20, Gly41, and Ser43. A GTP-binding site is contributed by 16 to 21 (DHGKTT). The interval 41–45 (GISIR) is G2. Residues Cys56, Cys59, Cys71, and Cys74 each contribute to the Zn(2+) site. Residues 88–91 (DAPG) form a G3 region. Residues 144 to 147 (NKID) and 179 to 181 (SAQ) contribute to the GTP site. Residues 144–147 (NKID) are G4. Positions 179-181 (SAQ) are G5.

It belongs to the TRAFAC class translation factor GTPase superfamily. Classic translation factor GTPase family. EIF2G subfamily. Heterotrimer composed of an alpha, a beta and a gamma chain. The cofactor is Mg(2+).

It catalyses the reaction GTP + H2O = GDP + phosphate + H(+). Its function is as follows. eIF-2 functions in the early steps of protein synthesis by forming a ternary complex with GTP and initiator tRNA. The protein is Translation initiation factor 2 subunit gamma of Methanothermobacter thermautotrophicus (strain ATCC 29096 / DSM 1053 / JCM 10044 / NBRC 100330 / Delta H) (Methanobacterium thermoautotrophicum).